The primary structure comprises 62 residues: Large ribosomal subunit protein bL28 (62 aa).

A disordered region spans residues 1-26 (MARKCYVTGKSPKSGNNRSHALNKTK). Over residues 11–20 (SPKSGNNRSH) the composition is skewed to polar residues.

Belongs to the bacterial ribosomal protein bL28 family.

The chain is Large ribosomal subunit protein bL28 from Exiguobacterium sibiricum (strain DSM 17290 / CCUG 55495 / CIP 109462 / JCM 13490 / 255-15).